Consider the following 553-residue polypeptide: Effector protein HopAB2 (553 aa).

3 disordered regions span residues 1 to 123 (MAGI…APRR), 198 to 227 (AVHQQAASAPVRSPTPTPASPAASSSGSSQ), and 239 to 275 (APNQGRSSNTAASQTPVDRSPPRVNQRPIRVDRAAMR). The tract at residues 1 to 308 (MAGINRAGPS…LRTALERHVM (308 aa)) is host recognition; Pto interaction. The segment covering 24–39 (SGQAHGSGSGASSSNS) has biased composition (low complexity). Positions 47–60 (SNTPPSNAPAPPPT) are enriched in pro residues. Over residues 217–227 (SPAASSSGSSQ) the composition is skewed to low complexity. Residues 242–255 (QGRSSNTAASQTPV) show a composition bias toward polar residues. The segment at 309-553 (QRLPIPLDIG…IAKYAFRIVP (245 aa)) is E3 ubiquitin-protein ligase. An Interaction with Pto-kinase motif is present at residues 325 to 328 (GINP). The tract at residues 361–380 (APRPAVPVAPATASRRPDGT) is disordered. The interval 512 to 529 (KDLAFMDMKKLAQFLAGK) is required for E3 ubiquitin-protein ligase and anti-PCD activities and pathogenesis.

It belongs to the HopAB family. Interacts physically with plant cell Pto. In terms of processing, auto-ubiquitinated.

Its subcellular location is the secreted. In terms of biological role, effector protein involved in gene-for-gene resistance in tomato plants. It is recognized by the host Pto resistance protein and elicits Pto and Prf-dependent hypersensitive response (HR) and programmed cell death (PCD), resulting in host immunity. In susceptible plants, acts as a virulence factor by suppressing PCD and HR-based plant immunity. This function requires its E3 ubiquitin ligase activity probably by recruiting E2 enzymes and transferring ubiquitin molecules to cellular proteins involved in regulation of PCD and targeting them for degradation. Also, induces expression of host genes involved in ethylene biosynthesis and signaling, in particular ACO1 and ACO2, encoding the ethylene-forming enzyme ACC oxidase. This chain is Effector protein HopAB2 (hopAB2), found in Pseudomonas syringae pv. tomato (strain ATCC BAA-871 / DC3000).